The primary structure comprises 338 residues: L-asparaginase 1 (338 aa).

Positions 4–329 (KSIYVAYTGG…ETIRKAMSQN (326 aa)) constitute an Asparaginase/glutaminase domain. Thr-14 functions as the O-isoaspartyl threonine intermediate in the catalytic mechanism. Substrate contacts are provided by residues 59–61 (DSS) and 91–92 (TD).

It belongs to the asparaginase 1 family. In terms of assembly, homotetramer.

The protein localises to the cytoplasm. The catalysed reaction is L-asparagine + H2O = L-aspartate + NH4(+). The sequence is that of L-asparaginase 1 (ansA) from Escherichia coli O157:H7.